The following is a 282-amino-acid chain: NADPH-dependent 7-cyano-7-deazaguanine reductase (282 aa).

88-90 is a substrate binding site; sequence IES. Residue 90 to 91 participates in NADPH binding; that stretch reads SK. The active-site Thioimide intermediate is C190. D197 serves as the catalytic Proton donor. 229–230 lines the substrate pocket; it reads HE. Residue 258-259 participates in NADPH binding; the sequence is RG.

Belongs to the GTP cyclohydrolase I family. QueF type 2 subfamily. Homodimer.

The protein resides in the cytoplasm. The enzyme catalyses 7-aminomethyl-7-carbaguanine + 2 NADP(+) = 7-cyano-7-deazaguanine + 2 NADPH + 3 H(+). The protein operates within tRNA modification; tRNA-queuosine biosynthesis. Functionally, catalyzes the NADPH-dependent reduction of 7-cyano-7-deazaguanine (preQ0) to 7-aminomethyl-7-deazaguanine (preQ1). The sequence is that of NADPH-dependent 7-cyano-7-deazaguanine reductase from Salmonella heidelberg (strain SL476).